A 395-amino-acid polypeptide reads, in one-letter code: S-adenosylmethionine synthase (395 aa).

Histidine 15 contacts ATP. Mg(2+) is bound at residue aspartate 17. Glutamate 43 provides a ligand contact to K(+). Positions 56 and 99 each coordinate L-methionine. The segment at 99–109 is flexible loop; sequence QSPDIAMGVDE. Residues 173–175, 239–240, aspartate 248, 254–255, alanine 271, and lysine 275 each bind ATP; these read DGK, RF, and RK. Aspartate 248 is an L-methionine binding site. Lysine 279 lines the L-methionine pocket.

This sequence belongs to the AdoMet synthase family. In terms of assembly, homotetramer; dimer of dimers. Mg(2+) serves as cofactor. K(+) is required as a cofactor.

The protein localises to the cytoplasm. It catalyses the reaction L-methionine + ATP + H2O = S-adenosyl-L-methionine + phosphate + diphosphate. Its pathway is amino-acid biosynthesis; S-adenosyl-L-methionine biosynthesis; S-adenosyl-L-methionine from L-methionine: step 1/1. Its function is as follows. Catalyzes the formation of S-adenosylmethionine (AdoMet) from methionine and ATP. The overall synthetic reaction is composed of two sequential steps, AdoMet formation and the subsequent tripolyphosphate hydrolysis which occurs prior to release of AdoMet from the enzyme. This chain is S-adenosylmethionine synthase, found in Desulforudis audaxviator (strain MP104C).